Reading from the N-terminus, the 292-residue chain is Early E4 34 kDa protein (292 aa).

Belongs to the adenoviridae E4 30 to 34 kDa protein family. As to quaternary structure, interacts with E1B-55k.

It is found in the host nucleus. It localises to the host cytoplasm. Functionally, plays a major role to prevent cellular inhibition of viral genome replication by nuclear bodies. Assembles an SCF-like E3 ubiquitin ligase complex based on the cellular proteins ELOB, ELOC, CUL5 and RBX1, in cooperation with viral E1B-55K. This viral RING-type ligase ubiquitinates cellular substrates prior to proteasomal degradation: p53/TP53, LIG4, MRE11-RAD50-NBS1 (MRN) complex, ITGA3, DAXX and BLM. The chain is Early E4 34 kDa protein from Human adenovirus D serotype 9 (HAdV-9).